The primary structure comprises 407 residues: Na(+)-translocating NADH-quinone reductase subunit F (407 aa).

Residues 6 to 26 (IFLAIGMFTAIVLGLVAIILV) traverse the membrane as a helical segment. Residues 35–127 (GDVTIQINGE…DMQIRVPEEV (93 aa)) enclose the 2Fe-2S ferredoxin-type domain. The [2Fe-2S] cluster site is built by Cys70, Cys76, Cys79, and Cys111. One can recognise an FAD-binding FR-type domain in the interval 130 to 269 (VKKWECTVES…YGPFGEFFAK (140 aa)).

The protein belongs to the NqrF family. Composed of six subunits; NqrA, NqrB, NqrC, NqrD, NqrE and NqrF. The cofactor is [2Fe-2S] cluster. Requires FAD as cofactor.

Its subcellular location is the cell inner membrane. The enzyme catalyses a ubiquinone + n Na(+)(in) + NADH + H(+) = a ubiquinol + n Na(+)(out) + NAD(+). Its function is as follows. NQR complex catalyzes the reduction of ubiquinone-1 to ubiquinol by two successive reactions, coupled with the transport of Na(+) ions from the cytoplasm to the periplasm. The first step is catalyzed by NqrF, which accepts electrons from NADH and reduces ubiquinone-1 to ubisemiquinone by a one-electron transfer pathway. The chain is Na(+)-translocating NADH-quinone reductase subunit F from Pseudomonas paraeruginosa (strain DSM 24068 / PA7) (Pseudomonas aeruginosa (strain PA7)).